Reading from the N-terminus, the 84-residue chain is uncharacterized protein (84 aa).

This is an uncharacterized protein from Azorhizobium caulinodans (strain ATCC 43989 / DSM 5975 / JCM 20966 / LMG 6465 / NBRC 14845 / NCIMB 13405 / ORS 571).